The following is a 281-amino-acid chain: Probable endonuclease 4 (281 aa).

The Zn(2+) site is built by histidine 70, histidine 110, glutamate 146, aspartate 180, histidine 183, histidine 217, aspartate 230, histidine 232, and glutamate 262.

The protein belongs to the AP endonuclease 2 family. Zn(2+) is required as a cofactor.

The enzyme catalyses Endonucleolytic cleavage to 5'-phosphooligonucleotide end-products.. In terms of biological role, endonuclease IV plays a role in DNA repair. It cleaves phosphodiester bonds at apurinic or apyrimidinic (AP) sites, generating a 3'-hydroxyl group and a 5'-terminal sugar phosphate. The protein is Probable endonuclease 4 of Nitratiruptor sp. (strain SB155-2).